The following is a 209-amino-acid chain: Large ribosomal subunit protein uL3 (209 aa).

An N5-methylglutamine modification is found at Gln150.

Belongs to the universal ribosomal protein uL3 family. As to quaternary structure, part of the 50S ribosomal subunit. Forms a cluster with proteins L14 and L19. Post-translationally, methylated by PrmB.

Its function is as follows. One of the primary rRNA binding proteins, it binds directly near the 3'-end of the 23S rRNA, where it nucleates assembly of the 50S subunit. The protein is Large ribosomal subunit protein uL3 of Vibrio campbellii (strain ATCC BAA-1116).